A 128-amino-acid chain; its full sequence is Gas vesicle protein O (128 aa).

Residues 1–49 (MANTPEDTQNTQNDSQNDSQNDSQKDTSARATSARAHQQPQEQPPSPMR) are disordered. Residues 7 to 22 (DTQNTQNDSQNDSQND) show a composition bias toward low complexity. Over residues 29–41 (ARATSARAHQQPQ) the composition is skewed to polar residues.

Belongs to the gas vesicle GvpO family.

The protein localises to the gas vesicle. A minor component of the gas vesicle. May play a role in transcription and/or RNA stability and in GV assembly. Gas vesicles are hollow, gas filled proteinaceous nanostructures found in some microorganisms. It is not clear what function gas vesicles perform in soil bacteria. The polypeptide is Gas vesicle protein O (Streptomyces sp. (strain CB03234)).